The primary structure comprises 1658 residues: MATIRGAIDRITDTTVRTTLQEEACRQIRTELKNVEHVNRYAIPPDAADALEHLGIGTNPFSVKLHTHGACKAIENQLLYVVGTLLPKERVTMLFLKKAKLNFMKRCPKFQDIFLNQHIEPRDVSRYCDFNVQSTSTSIPTHTAYISDTLHFMDRKDLVRLFINSPNLDTLYATIVLPVEAAYRQPSRYPDLYQINYDFDGFQYIPGGHGGGAYHHEFSHLEWLDVGHIHWRGPDNKDIQLTITAQMIESLGANHLFCFRRGNLRTPRVRTFGRDTQVLLPKIFRPVDKNFNRAIPLTLANKMLLYAKSINTVTFRDVVAKTRQLMKDKELETYTGADLLHMANYFFVVGALSGVNSYDQMLGLSAWEACTMALKNTVTNLWERITGKREFGKLLEALEWETLTYSRQVTQKYVGGTPARLPLPDITDQEEIFAQQEALDALTSGATKITTHHLMSAAARRSTEGPTMPTPAAQVPPTQNPKHTIDEVASRALVTKLQKNKRVYIQDDGPEYIMGHMAEVPAWYLEQDETTTRLRNRCAWFFGPPTHRYGHNDIEYHTTEYYPWVERIGNIFGKFNTCLAQTHDQGARIGYHADDEDCYDKDVTVATVNLTGNATFSLKTATGTRTWKLKPGDFIVLKPGAQGCTKHAISDCTTNRTSLTFRWQARPCPSQLRRVVNLGNVNNPKRKSKAQQWTPKTSNSDSPRLTQTPNSPTPKDVPVVSPKLADATAPTIRAVPENGAHTNMACVELTDLPETTTTHRPGKEPINDLTDSEPETESEQTENLVLNRFIQDLPTTSTHAWASETDSICSFQAEALGPSSVEALPWHEHLELINSLGFTGLERQYGPDNNLIWPITHYRTLPKSRTIEAPTDLVELLDTIDRHPTDVPYSKTRASAFGSDVKNLRIGALVKNQDKQWRASLALLCEENEHVLPTTVIHGAGGSGKSHLLQQWVSSTERGNVVVILPTIELLRDWLNKCPTTPKDSFKTFEKALVQNSAPVVIMDDYSKLPPGYIEAYVALKGQCKLLVLTGDPRQSHYHEENPEALISTLDPATDYFSKYCTYNINATHRNATTFANALGVYSERKLPVSVTCSSYQKSGWPTLVPSILKKTALNDMGQRSLTYAGCQGLTTPKVQIVLDNATPLCSEQVMYTALSRAVDQIHFFNTGPNHSDYWEKMNATPFLKTFIDHTREENLKEHQPAEPTVREHTPATHFPPANEALALEPWVEPLTDKHSRELHHKALGHSNCVQTDNPVVQLFPHQQAKDETLFWKTIDARIKITTPEENVRNFNMASDIGDILFLNYKEAMCLPADPIPFQQSLWDSCQAEVQQTYLSKPLAALANAAQRQDPDFDSNKIQLFLKSQWVKKVEKLGCLKIKPGQTIASFMQQTVMLYGTMARYMRRIRISLCPSHIMINCETNPTQISSWVRENWDFSGQSHENDFEAFDQSQDANMLQFELIKAKFHSIPEEIIAGYKHLKCHAHIFLGTIAIMRLSGEGPTFDANTECSIAYNHTRYFVPKGCAQLYAGDDSACAAPLSEKPSFQHISPELSLKSKAKIRSQTKGDYATFCGWLITPKGFIKNPTQLYASWLLAKHNKDLQDVARNYALDLRIAYQLKDELYELLSPEELDHHQLLVREMVKHKMGHLLNLPEGFKQT.

Residues 59-224 form the Alphavirus-like MT domain; that stretch reads NPFSVKLHTH…HHEFSHLEWL (166 aa). A disordered region spans residues 462–481; sequence STEGPTMPTPAAQVPPTQNP. The region spanning 574–665 is the Fe2OG dioxygenase domain; it reads KFNTCLAQTH…RTSLTFRWQA (92 aa). Residues histidine 592, aspartate 594, and histidine 647 each contribute to the Fe cation site. Arginine 656 lines the 2-oxoglutarate pocket. Disordered stretches follow at residues 676-721 and 754-776; these read VNLG…PVVS and ETTT…EPET. The span at 690–710 shows a compositional bias: polar residues; it reads AQQWTPKTSNSDSPRLTQTPN. Positions 910-1065 constitute a (+)RNA virus helicase ATP-binding domain; that stretch reads VKNQDKQWRA…YFSKYCTYNI (156 aa). Residues 1066-1199 enclose the (+)RNA virus helicase C-terminal domain; it reads NATHRNATTF…HTREENLKEH (134 aa). The region spanning 1437–1544 is the RdRp catalytic domain; that stretch reads GQSHENDFEA…AAPLSEKPSF (108 aa).

It belongs to the potexvirus/carlavirus RNA replication protein family. The cofactor is Fe(2+).

The catalysed reaction is RNA(n) + a ribonucleoside 5'-triphosphate = RNA(n+1) + diphosphate. It catalyses the reaction ATP + H2O = ADP + phosphate + H(+). RNA replication. The central part of this protein possibly functions as an ATP-binding helicase. This Indian citrus ringspot virus (isolate Kinnow mandarin/India/K1/1996) (ICRSV) protein is RNA replication protein.